Here is a 300-residue protein sequence, read N- to C-terminus: Protein MoxJ (300 aa).

Positions 1–25 (MSLVNGRRRTAASVVALTAALTALA) are cleaved as a signal peptide.

The protein localises to the periplasm. Functionally, may be involved in the assemblage of active methanol dehydrogenase and/or its cofactor PQQ in the periplasm. The sequence is that of Protein MoxJ (moxJ) from Methylorubrum extorquens (strain ATCC 14718 / DSM 1338 / JCM 2805 / NCIMB 9133 / AM1) (Methylobacterium extorquens).